We begin with the raw amino-acid sequence, 268 residues long: Large ribosomal subunit protein mL46 (268 aa).

The N-terminal 25 residues, 1 to 25 (MYLKRNIINMQRSFSRQFHISVRNS), are a transit peptide targeting the mitochondrion.

The protein belongs to the mitochondrion-specific ribosomal protein mL46 family. In terms of assembly, component of the mitochondrial large ribosomal subunit (mt-LSU). Mature yeast 74S mitochondrial ribosomes consist of a small (37S) and a large (54S) subunit. The 37S small subunit contains a 15S ribosomal RNA (15S mt-rRNA) and at least 32 different proteins. The 54S large subunit contains a 21S rRNA (21S mt-rRNA) and at least 45 different proteins.

It is found in the mitochondrion. Its function is as follows. Component of the mitochondrial ribosome (mitoribosome), a dedicated translation machinery responsible for the synthesis of mitochondrial genome-encoded proteins, including at least some of the essential transmembrane subunits of the mitochondrial respiratory chain. The mitoribosomes are attached to the mitochondrial inner membrane and translation products are cotranslationally integrated into the membrane. In Schizosaccharomyces pombe (strain 972 / ATCC 24843) (Fission yeast), this protein is Large ribosomal subunit protein mL46 (mrpl17).